Reading from the N-terminus, the 59-residue chain is Large ribosomal subunit protein uL30 (59 aa).

The protein belongs to the universal ribosomal protein uL30 family. As to quaternary structure, part of the 50S ribosomal subunit.

The chain is Large ribosomal subunit protein uL30 from Citrobacter koseri (strain ATCC BAA-895 / CDC 4225-83 / SGSC4696).